The following is a 531-amino-acid chain: Putative F-box protein At2g02890 (531 aa).

Positions 141–188 (RHSSSLTNDLIEEILSRLHSKSVARFRCVSKQCASMFASPYFKKLFQT) constitute an F-box domain.

In Arabidopsis thaliana (Mouse-ear cress), this protein is Putative F-box protein At2g02890.